A 174-amino-acid chain; its full sequence is Type II restriction enzyme Bsp6I (174 aa).

It carries out the reaction Endonucleolytic cleavage of DNA to give specific double-stranded fragments with terminal 5'-phosphates.. Functionally, a P subtype restriction enzyme that recognizes the double-stranded sequence 5'-GCNGC-3' and cleaves after C-2. This is Type II restriction enzyme Bsp6I from Bacillus sp. (strain RFL6).